A 122-amino-acid chain; its full sequence is Large ribosomal subunit protein bL12 (122 aa).

This sequence belongs to the bacterial ribosomal protein bL12 family. Homodimer. Part of the ribosomal stalk of the 50S ribosomal subunit. Forms a multimeric L10(L12)X complex, where L10 forms an elongated spine to which 2 to 4 L12 dimers bind in a sequential fashion. Binds GTP-bound translation factors.

Forms part of the ribosomal stalk which helps the ribosome interact with GTP-bound translation factors. Is thus essential for accurate translation. This Vibrio campbellii (strain ATCC BAA-1116) protein is Large ribosomal subunit protein bL12.